The following is a 105-amino-acid chain: Large ribosomal subunit protein bL21 (105 aa).

Belongs to the bacterial ribosomal protein bL21 family. In terms of assembly, part of the 50S ribosomal subunit. Contacts protein L20.

Functionally, this protein binds to 23S rRNA in the presence of protein L20. This chain is Large ribosomal subunit protein bL21, found in Rickettsia canadensis (strain McKiel).